Here is a 143-residue protein sequence, read N- to C-terminus: Hemoglobin subunit alpha-2 (143 aa).

The residue at position 2 (Ser-2) is an N-acetylserine. The region spanning 2 to 143 (SLSSKDKATV…LALALSEKYR (142 aa)) is the Globin domain. His-60 is an O2 binding site. His-89 is a heme b binding site.

It belongs to the globin family. Hb 2 is a heterotetramer of two alpha-2 and two beta-1 chains. Hb 3 is a heterotetramer of two alpha-2 and two beta-2 chains. Red blood cells.

In terms of biological role, involved in oxygen transport from gills to the various peripheral tissues. The chain is Hemoglobin subunit alpha-2 (hba2) from Arctogadus glacialis (Arctic cod).